A 164-amino-acid polypeptide reads, in one-letter code: PTS system sorbose-specific EIIB component (164 aa).

The PTS EIIB type-4 domain occupies 1–164 (MQITLARIDD…DKINETAFCE (164 aa)). His14 acts as the Pros-phosphohistidine intermediate in catalysis. His14 carries the post-translational modification Phosphohistidine; by EIIA.

Dimer of dimers.

The protein resides in the cytoplasm. The enzyme catalyses keto-L-sorbose(out) + N(pros)-phospho-L-histidyl-[protein] = L-sorbose 1-phosphate(in) + L-histidyl-[protein]. Functionally, the phosphoenolpyruvate-dependent sugar phosphotransferase system (PTS), a major carbohydrate active transport system, catalyzes the phosphorylation of incoming sugar substrates concomitant with their translocation across the cell membrane. The enzyme II SorABFM PTS system is involved in L-sorbose transport. This chain is PTS system sorbose-specific EIIB component, found in Klebsiella pneumoniae.